Here is a 121-residue protein sequence, read N- to C-terminus: NAD(P)H-quinone oxidoreductase subunit M (121 aa).

The protein belongs to the complex I NdhM subunit family. NDH-1 can be composed of about 15 different subunits; different subcomplexes with different compositions have been identified which probably have different functions.

It localises to the cellular thylakoid membrane. It carries out the reaction a plastoquinone + NADH + (n+1) H(+)(in) = a plastoquinol + NAD(+) + n H(+)(out). The catalysed reaction is a plastoquinone + NADPH + (n+1) H(+)(in) = a plastoquinol + NADP(+) + n H(+)(out). Its function is as follows. NDH-1 shuttles electrons from an unknown electron donor, via FMN and iron-sulfur (Fe-S) centers, to quinones in the respiratory and/or the photosynthetic chain. The immediate electron acceptor for the enzyme in this species is believed to be plastoquinone. Couples the redox reaction to proton translocation, and thus conserves the redox energy in a proton gradient. Cyanobacterial NDH-1 also plays a role in inorganic carbon-concentration. This is NAD(P)H-quinone oxidoreductase subunit M from Synechococcus sp. (strain JA-3-3Ab) (Cyanobacteria bacterium Yellowstone A-Prime).